We begin with the raw amino-acid sequence, 506 residues long: GTPase Der (506 aa).

2 EngA-type G domains span residues 3-166 and 218-391; these read PVVA…GEQL and IKIA…ACAT. Residues 9–16, 56–60, 118–121, 224–231, 271–275, and 336–339 each bind GTP; these read GRPNVGKS, DTGGI, NKTD, DTAGV, and NKWD. In terms of domain architecture, KH-like spans 392–476; sequence QKTSTSMLTR…PIRIQFQEGN (85 aa).

Belongs to the TRAFAC class TrmE-Era-EngA-EngB-Septin-like GTPase superfamily. EngA (Der) GTPase family. Associates with the 50S ribosomal subunit.

GTPase that plays an essential role in the late steps of ribosome biogenesis. The protein is GTPase Der of Actinobacillus pleuropneumoniae serotype 3 (strain JL03).